The sequence spans 98 residues: NADH-ubiquinone oxidoreductase chain 4L (98 aa).

Transmembrane regions (helical) follow at residues P2–F22, S29–L49, and I61–V81.

This sequence belongs to the complex I subunit 4L family. As to quaternary structure, core subunit of respiratory chain NADH dehydrogenase (Complex I) which is composed of 45 different subunits.

The protein localises to the mitochondrion inner membrane. The catalysed reaction is a ubiquinone + NADH + 5 H(+)(in) = a ubiquinol + NAD(+) + 4 H(+)(out). In terms of biological role, core subunit of the mitochondrial membrane respiratory chain NADH dehydrogenase (Complex I) which catalyzes electron transfer from NADH through the respiratory chain, using ubiquinone as an electron acceptor. Part of the enzyme membrane arm which is embedded in the lipid bilayer and involved in proton translocation. The chain is NADH-ubiquinone oxidoreductase chain 4L (MT-ND4L) from Avahi unicolor (Sambirano woolly lemur).